The primary structure comprises 557 residues: Dihydroxy-acid dehydratase (557 aa).

Asp-78 contributes to the Mg(2+) binding site. Cys-119 provides a ligand contact to [2Fe-2S] cluster. Residues Asp-120 and Lys-121 each coordinate Mg(2+). Residue Lys-121 is modified to N6-carboxylysine. Cys-191 is a binding site for [2Fe-2S] cluster. Glu-442 serves as a coordination point for Mg(2+). Ser-468 (proton acceptor) is an active-site residue.

It belongs to the IlvD/Edd family. Homodimer. Requires [2Fe-2S] cluster as cofactor. Mg(2+) is required as a cofactor.

It catalyses the reaction (2R)-2,3-dihydroxy-3-methylbutanoate = 3-methyl-2-oxobutanoate + H2O. The enzyme catalyses (2R,3R)-2,3-dihydroxy-3-methylpentanoate = (S)-3-methyl-2-oxopentanoate + H2O. The protein operates within amino-acid biosynthesis; L-isoleucine biosynthesis; L-isoleucine from 2-oxobutanoate: step 3/4. Its pathway is amino-acid biosynthesis; L-valine biosynthesis; L-valine from pyruvate: step 3/4. In terms of biological role, functions in the biosynthesis of branched-chain amino acids. Catalyzes the dehydration of (2R,3R)-2,3-dihydroxy-3-methylpentanoate (2,3-dihydroxy-3-methylvalerate) into 2-oxo-3-methylpentanoate (2-oxo-3-methylvalerate) and of (2R)-2,3-dihydroxy-3-methylbutanoate (2,3-dihydroxyisovalerate) into 2-oxo-3-methylbutanoate (2-oxoisovalerate), the penultimate precursor to L-isoleucine and L-valine, respectively. This Lachnospira eligens (strain ATCC 27750 / DSM 3376 / VPI C15-48 / C15-B4) (Eubacterium eligens) protein is Dihydroxy-acid dehydratase.